A 480-amino-acid polypeptide reads, in one-letter code: Aspartyl/glutamyl-tRNA(Asn/Gln) amidotransferase subunit B (480 aa).

This sequence belongs to the GatB/GatE family. GatB subfamily. Heterotrimer of A, B and C subunits.

The catalysed reaction is L-glutamyl-tRNA(Gln) + L-glutamine + ATP + H2O = L-glutaminyl-tRNA(Gln) + L-glutamate + ADP + phosphate + H(+). It catalyses the reaction L-aspartyl-tRNA(Asn) + L-glutamine + ATP + H2O = L-asparaginyl-tRNA(Asn) + L-glutamate + ADP + phosphate + 2 H(+). Functionally, allows the formation of correctly charged Asn-tRNA(Asn) or Gln-tRNA(Gln) through the transamidation of misacylated Asp-tRNA(Asn) or Glu-tRNA(Gln) in organisms which lack either or both of asparaginyl-tRNA or glutaminyl-tRNA synthetases. The reaction takes place in the presence of glutamine and ATP through an activated phospho-Asp-tRNA(Asn) or phospho-Glu-tRNA(Gln). This Caldicellulosiruptor bescii (strain ATCC BAA-1888 / DSM 6725 / KCTC 15123 / Z-1320) (Anaerocellum thermophilum) protein is Aspartyl/glutamyl-tRNA(Asn/Gln) amidotransferase subunit B.